The primary structure comprises 108 residues: UPF0060 membrane protein YnfA (108 aa).

The Periplasmic segment spans residues M1–T5. The helical transmembrane segment at L6 to L26 threads the bilayer. Over K27 to A30 the chain is Cytoplasmic. The helical transmembrane segment at S31–L51 threads the bilayer. Over H52 to Y60 the chain is Periplasmic. A helical membrane pass occupies residues A61–V81. The Cytoplasmic portion of the chain corresponds to K82–T84. A helical membrane pass occupies residues L85–W105. Topologically, residues G106–T108 are periplasmic.

The protein belongs to the UPF0060 family.

Its subcellular location is the cell inner membrane. The protein is UPF0060 membrane protein YnfA of Escherichia coli O139:H28 (strain E24377A / ETEC).